The primary structure comprises 297 residues: Cbb3-type cytochrome c oxidase subunit CcoP (297 aa).

Topologically, residues 1–35 (MSKKPTTKKEVQTTGHQWDGIEELNTPLPRWWLWT) are cytoplasmic. A helical membrane pass occupies residues 36–56 (FYATIIWGVAYSIAMPAWPIF). Residues 57 to 297 (SDKATPGLLG…SYVHSLGGGQ (241 aa)) lie on the Periplasmic side of the membrane. Cytochrome c domains are found at residues 108–199 (YTRN…LQIS) and 206–294 (VKAT…HSLG). Heme c is bound by residues Cys-121, Cys-124, His-125, Met-174, Cys-219, Cys-222, His-223, and Met-264.

The protein belongs to the CcoP / FixP family. In terms of assembly, component of the cbb3-type cytochrome c oxidase at least composed of CcoN, CcoO, CcoQ and CcoP. Interacts with CcoQ. Requires heme c as cofactor.

Its subcellular location is the cell inner membrane. The protein operates within energy metabolism; oxidative phosphorylation. Its function is as follows. C-type cytochrome. Part of the cbb3-type cytochrome c oxidase complex. CcoP subunit is required for transferring electrons from donor cytochrome c via its heme groups to CcoO subunit. From there, electrons are shuttled to the catalytic binuclear center of CcoN subunit where oxygen reduction takes place. The complex also functions as a proton pump. This is Cbb3-type cytochrome c oxidase subunit CcoP from Rhodobacter capsulatus (Rhodopseudomonas capsulata).